The chain runs to 225 residues: Ribulose-phosphate 3-epimerase (225 aa).

Serine 9 serves as a coordination point for substrate. Residues histidine 34, aspartate 36, and histidine 68 each contribute to the a divalent metal cation site. The active-site Proton acceptor is aspartate 36. Substrate contacts are provided by residues histidine 68, 144–147, 177–179, and 199–200; these read GFGG, DGG, and GS. Residue aspartate 177 coordinates a divalent metal cation. Aspartate 177 acts as the Proton donor in catalysis.

The protein belongs to the ribulose-phosphate 3-epimerase family. The cofactor is a divalent metal cation.

The catalysed reaction is D-ribulose 5-phosphate = D-xylulose 5-phosphate. It participates in carbohydrate degradation. In terms of biological role, catalyzes the reversible epimerization of D-ribulose 5-phosphate to D-xylulose 5-phosphate. This chain is Ribulose-phosphate 3-epimerase, found in Escherichia coli O157:H7.